Reading from the N-terminus, the 498-residue chain is ATP synthase subunit beta, chloroplastic (498 aa).

ATP is bound at residue 172 to 179; the sequence is GGAGVGKT.

It belongs to the ATPase alpha/beta chains family. In terms of assembly, F-type ATPases have 2 components, CF(1) - the catalytic core - and CF(0) - the membrane proton channel. CF(1) has five subunits: alpha(3), beta(3), gamma(1), delta(1), epsilon(1). CF(0) has four main subunits: a(1), b(1), b'(1) and c(9-12).

The protein localises to the plastid. The protein resides in the chloroplast thylakoid membrane. It catalyses the reaction ATP + H2O + 4 H(+)(in) = ADP + phosphate + 5 H(+)(out). In terms of biological role, produces ATP from ADP in the presence of a proton gradient across the membrane. The catalytic sites are hosted primarily by the beta subunits. This Galbulimima belgraveana (Northern pigeonberry ash) protein is ATP synthase subunit beta, chloroplastic.